The chain runs to 371 residues: Aurora kinase (371 aa).

Polar residues-rich tracts occupy residues 1–15 (MSMK…SVSL) and 48–80 (RIST…YTTD). Residues 1–84 (MSMKQLETSM…SSYTTDPPSP (84 aa)) are disordered. One can recognise a Protein kinase domain in the interval 99–350 (FEIGKALGKG…LKDMHKHPWI (252 aa)). ATP-binding positions include 105–113 (LGKGKFGKV) and K128. The active-site Proton acceptor is the D222.

It belongs to the protein kinase superfamily. Ser/Thr protein kinase family. Aurora subfamily.

Its subcellular location is the nucleus. It localises to the cytoplasm. The protein localises to the cytoskeleton. The protein resides in the spindle. It is found in the chromosome. Its subcellular location is the centromere. It localises to the kinetochore. It carries out the reaction L-seryl-[protein] + ATP = O-phospho-L-seryl-[protein] + ADP + H(+). The catalysed reaction is L-threonyl-[protein] + ATP = O-phospho-L-threonyl-[protein] + ADP + H(+). Functionally, component of the chromosomal passenger complex (CPC), a complex that acts as a key regulator of chromosome segregation and cytokinesis. Has a role in error-correction of aberrent kinetochore-microtubule attachments to ensure that sister kinetochores become bioriented and connect to opposite poles by promoting spindle assembly checkpoint signaling. This chain is Aurora kinase (IPL1), found in Yarrowia lipolytica (strain CLIB 122 / E 150) (Yeast).